The primary structure comprises 614 residues: Glucosidase 2 subunit beta (614 aa).

The signal sequence occupies residues 1–19; sequence MGLHAILLLLLLRISASAA. The N-linked (GlcNAc...) asparagine glycan is linked to N115. 3 stretches are compositionally biased toward basic and acidic residues: residues 194-222, 231-272, and 324-351; these read EEER…KKAS, QENH…HDPE, and TGEK…HSEE. A disordered region spans residues 194-396; the sequence is EEERLRKEKE…SHESDDEYVD (203 aa). Over residues 352-364 the composition is skewed to acidic residues; the sequence is THEDESDVPESAE. The segment covering 372–382 has biased composition (basic and acidic residues); that stretch reads SEVEDDRHKYD. Residues 383 to 396 show a composition bias toward acidic residues; it reads DEDFSHESDDEYVD. Residues 497–592 form the MRH domain; the sequence is DQCFESKEGK…VLSTPALCDE (96 aa). 3 disulfide bridges follow: C499–C512, C549–C578, and C563–C590.

As to quaternary structure, heterodimer of a catalytic alpha subunit and a beta subunit.

The protein resides in the endoplasmic reticulum. The protein operates within glycan metabolism; N-glycan metabolism. In terms of biological role, regulatory subunit of glucosidase II. May be required for defense response elicited by pathogen-associated molecular patterns (PAMPs). This chain is Glucosidase 2 subunit beta, found in Oryza sativa subsp. japonica (Rice).